Reading from the N-terminus, the 269-residue chain is Magnetosome protein MamX (269 aa).

Residues 1 to 10 (MNTKAVAHPD) lie on the Cytoplasmic side of the membrane. Residues 11 to 31 (IAVWIMALGIAFSMALVLTAL) form a helical membrane-spanning segment. Topologically, residues 32–269 (FNANPWEDHT…NVGGVDAEER (238 aa)) are lumenal. Residues 48-71 (IVAGMAAPHRDGREKMVCSSCHIV) carry the MCR (magnetochrome) 1 motif. Cys65, Cys68, His69, Cys104, Cys107, and His108 together coordinate heme. An MCR 2 motif is present at residues 87 to 110 (IVEGTPAPHVDGREKMACASCHTI).

This sequence belongs to the magnetosome MamX family. In terms of assembly, probably interacts with FtsZ-like and MamY proteins. It depends on heme as a cofactor.

The protein localises to the magnetosome membrane. Functionally, required for correct biomineralization of the magnetosome, maybe via redox control. May function with MamY, MamZ amd Mms6 in biomineralization. This chain is Magnetosome protein MamX, found in Magnetospirillum gryphiswaldense (strain DSM 6361 / JCM 21280 / NBRC 15271 / MSR-1).